The following is a 1491-amino-acid chain: MEEPSEPEGLIDWKERCVALEAQLMKFRVQASKIRELLADKMQQLERQVIDAERQAEKAFQEVQVMEEKLKAANIQTSESETRLYKKCQDLESVMQEKDDIIQNLALRLEEQKQVRIQEAKIIEEKAAKIKEWVTVKLNELEVENQNLRFINQTQTEEIRAIQSKLQELQEKKISCVSSPKTSEGQRNLTFGCFLSRAKSPPCVVRCEEVSKMASNEPEITEGRCVEEMEIAEKPADNQVQENSRSQRKLHETSCSSEQNQKTRASFAMDGGTSQNSGVPVSDWSSDEDDGSKGRSKSRCTSTLSSHTSEEGGQCGRLGSEAYLTASDDSSSIFEEETFDGNRPEQKKLCSWQQKAPWKAQGNLAKGRSQSGVKEQDSSSDELNKKFHSQRLDYTSSSSEANTPSPILTPALTPRYPNSLPGKGGAPLVPPPFQPPPKLRVPNVFSISVALTKRHLSQPQLCSDRMFGTNRNAISMIRPLRPQETDLDVVDGDGAEAVNRMDTGCDDGLFSYDSQDPPPCADDQENSEAPKKAPCNKPPTPPLHRFPSWESRIYAVAKSGIRVSEAFNMEHANKNSADILSYSAASLYTSLIYKNMTTPVYTTLKGKATQISSSPFLDDSSGSDEEDSSRSSSRLSESDARSRSGPSSPRAMKRGVSDSSAASESDYAIPPDAYPIDAECSQPEQKLLKTCLASCDNGKNEPLEKSGYLLKMSVRVKTWKRRWFVLKGGELLYYKSPSDVIRKPQGHIELSASCSILRGDNKQTVQLATEKHTYYLTADSPNILEEWIKVLQSVLRVQAANPLCLQPEGKPAVKGLLTKVKHGYSKRVWCMLVGKVLYYFRNQEDKFPLGQLKLWEAKVEEVDRSCDSDEDYETRGCYLLSTHYTIIVHPKDQGPTYLLIGSKHEKEAWLYHLTVAAGSNNINVGSEFEQLVCKLLNIEGEPSSQIWRHPMLCHSKEGILSPLTTLPSEALQTEAIKLFKTCQLFINAAVDSPAIDYHISLAQSALQVCLTHPELQNEICCQLIKQTRRRQLQNQPGPLQGWQLLALCVGLFLPHHPFLWLLQLHLQRNADSRTEFGKYAIYCQRCVERTQQNGDREARPSRMEILSTLLRNPYHHSRPFSIPVHFMNGLYQVVGFDASTTVEEFLNTLNQDTGMRKPAQSGFALFTDDPSGRDLEHCLQGNIKICDIISKWEQASKEQQPGKCEGSRTVRLTYKNRLYFSVQARGETDREKTLLLYQTNDQIINGLFPLNKDLALEMAALLAQVDIGDFERPFSTPAGPVTNQCKANQTLKQVIERFYPKRYREGCSEEQLRQLYQRLSTKWMALRGHSAADCIRIYLTVARKWPFFGAKLFFAKPIAPSSLGNNCVWLAVHENGLSILEYTSMRLVTSYMYKGLMTFGGYQEDFMVVVSTQSKDRPTEKLLFAMAKHKILEITLLIASYINSFHQQKTTFHHLSAPALLSPRTQAPQARVMGSQPPLSNSRPTKGPTLL.

Residues 19–177 adopt a coiled-coil conformation; the sequence is ALEAQLMKFR…ELQEKKISCV (159 aa). Disordered stretches follow at residues 232-435, 506-546, and 612-668; these read AEKP…PFQP, DDGL…LHRF, and SSSP…SDYA. The segment covering 253 to 264 has biased composition (polar residues); that stretch reads TSCSSEQNQKTR. A compositionally biased stretch (basic and acidic residues) spans 374 to 385; the sequence is KEQDSSSDELNK. The segment covering 392–406 has biased composition (polar residues); sequence LDYTSSSSEANTPSP. Over residues 657 to 666 the composition is skewed to low complexity; the sequence is SDSSAASESD. PH domains lie at 702 to 796 and 810 to 918; these read PLEK…SVLR and KPAV…VAAG. In terms of domain architecture, MyTH4 spans 954-1109; the sequence is HSKEGILSPL…PSRMEILSTL (156 aa). The FERM domain maps to 1120-1449; that stretch reads FSIPVHFMNG…SYINSFHQQK (330 aa). Positions 1466–1491 are disordered; sequence QAPQARVMGSQPPLSNSRPTKGPTLL.

In terms of assembly, self-associates. Interacts with TGFB1I1. Expressed in the kidney and testis. Expressed in the kidney exclusively by glomerular podocytes.

Its subcellular location is the cytoplasm. It localises to the cytoskeleton. The protein localises to the cell membrane. The protein resides in the cell projection. It is found in the lamellipodium. In terms of biological role, in the kidney glomerulus may play a role in linking podocyte foot processes to the glomerular basement membrane. May be involved in stabilization of F-actin by attenuating its depolymerization. Can recruit TGFB1I1 from focal adhesions to podocyte lamellipodia. The chain is Pleckstrin homology domain-containing family H member 2 (Plekhh2) from Mus musculus (Mouse).